The sequence spans 605 residues: Protein MLN51 homolog (605 aa).

2 stretches are compositionally biased toward acidic residues: residues M1–D16 and S30–D40. Disordered stretches follow at residues M1–Y88, N101–F132, D151–P275, T350–S380, and Y544–K605. At S30 the chain carries Phosphoserine. Positions D41–S57 are enriched in basic and acidic residues. Residues S75 to D87 show a composition bias toward acidic residues. Basic and acidic residues predominate over residues Q166 to T192. 3 stretches are compositionally biased toward polar residues: residues N214–F228, N247–E265, and L367–S380. Residues P552 to P567 are compositionally biased toward low complexity. Over residues V578–K593 the composition is skewed to polar residues.

The protein belongs to the CASC3 family. In terms of assembly, weakly interacts with EIF4A3.

It localises to the nucleus. It is found in the cytoplasm. Core component of the splicing-dependent multiprotein exon junction complex (EJC) deposited at splice junctions on mRNAs. The EJC is a dynamic structure consisting of core proteins and several peripheral nuclear and cytoplasmic associated factors that join the complex only transiently either during EJC assembly or during subsequent mRNA metabolism. The EJC marks the position of the exon-exon junction in the mature mRNA for the gene expression machinery and the core components remain bound to spliced mRNAs throughout all stages of mRNA metabolism thereby influencing downstream processes including nuclear mRNA export, subcellular mRNA localization, translation efficiency and nonsense-mediated mRNA decay (NMD). Stimulates the ATPase and RNA-helicase activities of EIF4A3. This chain is Protein MLN51 homolog, found in Arabidopsis thaliana (Mouse-ear cress).